The sequence spans 148 residues: Fibroblast growth factor 1 (148 aa).

A propeptide spanning residues 1 to 11 is cleaved from the precursor; that stretch reads EITTFAALTER. Asn29 contributes to the heparin binding site. Residues 123–139 form a heparin-binding region; the sequence is KKNGKTKLGSRTHFGQK.

Belongs to the heparin-binding growth factors family.

Its subcellular location is the secreted. It is found in the cytoplasm. The protein localises to the cell cortex. It localises to the cytosol. The protein resides in the nucleus. In terms of biological role, plays an important role in the regulation of cell survival, cell division, angiogenesis, cell differentiation and cell migration. Functions as a potent mitogen in vitro. Acts as a ligand for FGFR1 and integrins. Binds to FGFR1 in the presence of heparin leading to FGFR1 dimerization and activation via sequential autophosphorylation on tyrosine residues which act as docking sites for interacting proteins, leading to the activation of several signaling cascades. Binds to integrins. Its binding to integrins and subsequent ternary complex formation with integrins and FGFR1 are essential for FGF1 signaling. The protein is Fibroblast growth factor 1 (fgf1) of Cynops pyrrhogaster (Japanese fire-bellied newt).